The chain runs to 258 residues: Ribosomal RNA small subunit methyltransferase A (258 aa).

6 residues coordinate S-adenosyl-L-methionine: histidine 13, leucine 15, glycine 40, glutamate 61, aspartate 86, and asparagine 106.

This sequence belongs to the class I-like SAM-binding methyltransferase superfamily. rRNA adenine N(6)-methyltransferase family. RsmA subfamily.

The protein resides in the cytoplasm. The enzyme catalyses adenosine(1518)/adenosine(1519) in 16S rRNA + 4 S-adenosyl-L-methionine = N(6)-dimethyladenosine(1518)/N(6)-dimethyladenosine(1519) in 16S rRNA + 4 S-adenosyl-L-homocysteine + 4 H(+). Specifically dimethylates two adjacent adenosines (A1518 and A1519) in the loop of a conserved hairpin near the 3'-end of 16S rRNA in the 30S particle. May play a critical role in biogenesis of 30S subunits. In Coxiella burnetii (strain CbuG_Q212) (Coxiella burnetii (strain Q212)), this protein is Ribosomal RNA small subunit methyltransferase A.